A 346-amino-acid polypeptide reads, in one-letter code: Small glutamine-rich tetratricopeptide repeat-containing protein 2 (346 aa).

TPR repeat units lie at residues 102-135 (AEDL…LPTN), 136-169 (AIYY…DPSY), 170-203 (FRGY…EGDN), and 205-229 (TEAM…EKTV). Residues 219–249 (VEQSLNLEKTVPEQSRDADVDASQGASAGGL) form a disordered region. The span at 228 to 237 (TVPEQSRDAD) shows a compositional bias: basic and acidic residues. Threonine 308 is subject to Phosphothreonine. The tract at residues 325–346 (GNLFGGAGAQSTDETPDNENKQ) is disordered.

It belongs to the SGT family. In terms of assembly, interacts with HSC82, HSP104, MDY2, SSA1 and SSA2.

The protein localises to the cytoplasm. Functionally, co-chaperone that binds to the molecular chaperone Hsp70 (SSA1 and SSA2). Regulates Hsp70 ATPase activity. Required for recovery from heat shock. The chain is Small glutamine-rich tetratricopeptide repeat-containing protein 2 (SGT2) from Saccharomyces cerevisiae (strain ATCC 204508 / S288c) (Baker's yeast).